The sequence spans 301 residues: MANCEFSPVSGDKPCCRLSRRAQVCLGVCLLVLLILVVVVAVVLPRWRQQWSGSGTTSRFPETVLARCVKYTEVHPEMRHVDCQSVWDAFKGAFISKYPCNITEEDYQPLVKLGTQTVPCNKTLLWSRIKDLAHQFTQVQRDMFTLEDMLLGYLADDLTWCGEFNTFEINYQSCPDWRKDCSNNPVSVFWKTVSRRFAETACGVVHVMLNGSRSKIFDKNSTFGSVEVHNLQPEKVQALEAWVIHGGREDSRDLCQDPTIKELESIISKRNIRFFCKNIYRPDKFLQCVKNPEDSSCLSGI.

Topologically, residues 1-21 are cytoplasmic; that stretch reads MANCEFSPVSGDKPCCRLSRR. Residues 22 to 43 traverse the membrane as a helical; Signal-anchor for type II membrane protein segment; sequence AQVCLGVCLLVLLILVVVVAVV. Topologically, residues 44-301 are extracellular; that stretch reads LPRWRQQWSG…PEDSSCLSGI (258 aa). Cystine bridges form between cysteine 68-cysteine 83, cysteine 100-cysteine 181, and cysteine 161-cysteine 174. A glycan (N-linked (GlcNAc...) asparagine) is linked at asparagine 101. Residue cysteine 120 is part of the active site. Residue asparagine 121 is glycosylated (N-linked (GlcNAc...) asparagine). Residue cysteine 202 is part of the active site. Residues asparagine 210 and asparagine 220 are each glycosylated (N-linked (GlcNAc...) asparagine). Intrachain disulfides connect cysteine 255–cysteine 276 and cysteine 288–cysteine 297.

This sequence belongs to the ADP-ribosyl cyclase family. In terms of assembly, homodimer.

It localises to the cell surface. The protein localises to the membrane. The catalysed reaction is NAD(+) = cyclic ADP-beta-D-ribose + nicotinamide + H(+). It carries out the reaction 2'-phospho-cyclic ADP-ribose + nicotinate = nicotinate-adenine dinucleotide phosphate. The enzyme catalyses NAD(+) + H2O = ADP-D-ribose + nicotinamide + H(+). It catalyses the reaction nicotinate + NADP(+) = nicotinate-adenine dinucleotide phosphate + nicotinamide. ATP inhibits the cADPR hydrolyzing activity. Functionally, synthesizes cyclic ADP-ribose (cADPR), a second messenger for glucose-induced insulin secretion. Synthesizes the Ca(2+) mobilizer nicotinate-adenine dinucleotide phosphate, NAADP(+), from 2'-phospho-cADPR and nicotinic acid, as well as from NADP(+) and nicotinic acid. Also has cADPR hydrolase activity. In Macaca fascicularis (Crab-eating macaque), this protein is ADP-ribosyl cyclase/cyclic ADP-ribose hydrolase 1 (CD38).